We begin with the raw amino-acid sequence, 249 residues long: Low affinity immunoglobulin gamma Fc region receptor III-A (249 aa).

A signal peptide spans 1-20; it reads MWYLLLPTALLLTVSSGVGA. Over 21–203 the chain is Extracellular; sequence GLQKAVVNLD…SPSSFLPWHQ (183 aa). Ig-like C2-type domains are found at residues 31–103 and 117–188; these read PEWV…QLDV and FQEG…LQIS. 2 disulfide bridges follow: C46/C88 and C127/C171. 2 N-linked (GlcNAc...) asparagine glycosylation sites follow: N55 and N62. N179 is a glycosylation site (N-linked (GlcNAc...) asparagine). Residues 204–224 form a helical membrane-spanning segment; the sequence is ITFCLLIGLLFAIDTVLYFSV. Residues 225-249 are Cytoplasmic-facing; the sequence is QRSLQSSVAVYEEPKLHWSKEPQDK. Y235 is subject to Phosphotyrosine.

As to quaternary structure, forms a heterooligomeric complex with ITAM-containing signaling subunits FCER1G. Interacts (via transmembrane domain) with signaling subunits; this interaction is a prerequisite for receptor complex expression on the cell surface and intracellular signal transduction. Binds the Fc region of antigen-complexed IgG. N-glycosylated. In terms of processing, phosphorylated following receptor ligation.

The protein localises to the cell membrane. Receptor for the invariable Fc fragment of immunoglobulin gamma (IgG). Binds with intermediate affinity to both IgG2a and IgG2b. Can bind to IgG2a and IgG2b monomers. Does not display binding to IgG1 or IgG3. Recognizes neutralizing virus-specific IgGs displayed on the cell surface of infected cells and triggers antibody-dependent cellular cytotoxicity (ADCC). Confers protection to lethal influenza virus infection. On splenic dendritic cells, uptakes antigen immune complexes and efficiently divert them into MHC class I and II antigen presentation pathways to provide for superior priming of CD4-positive and CD8-positive T cell immune responses. Mediates neutrophil activation by IgG complexes redundantly with FCGR2A. Plays a role in promoting bone resorption by enhancing osteoclast differentiation following binding to IgG2a. Also acts as a receptor for the Fc region of immunoglobulin epsilon (IgE). Binds with low affinity to both the a and b allotypes of IgE. Has also been shown to bind to IgE allotype a only but not to allotype b. Binds aggregated IgE but not the monomeric form and bound monomeric IgG is readily displaced by IgE complexes. Binding to IgE promotes macrophage-mediated phagocytosis, antigen presentation to T cells, production of pro-inflammatory cytokines and the late phase of cutaneous allergic reactions. Mediates enhanced ADCC in response to afucosylated IgGs. The chain is Low affinity immunoglobulin gamma Fc region receptor III-A from Rattus norvegicus (Rat).